The sequence spans 721 residues: Xylosyl- and glucuronyltransferase LARGE2 (721 aa).

Topologically, residues M1–R8 are cytoplasmic. Residues A9–G29 form a helical; Signal-anchor for type II membrane protein membrane-spanning segment. Residues D30–G721 are Lumenal-facing. A disordered region spans residues D59–P89. N-linked (GlcNAc...) asparagine glycosylation is found at N80 and N107. The xylosyltransferase activity stretch occupies residues L97–R372. Mn(2+) is bound by residues D201 and D203. N-linked (GlcNAc...) asparagine glycosylation is present at N231. Positions R373–P715 are glucuronyltransferase activity. Mn(2+) contacts are provided by D521 and D523.

In the C-terminal section; belongs to the glycosyltransferase 49 family. The protein in the N-terminal section; belongs to the glycosyltransferase 8 family. As to quaternary structure, interacts with B4GAT1. It depends on Mn(2+) as a cofactor. As to expression, widely expressed. Expressed at high level in placenta, pancreas and kidney compared to LARGE. Not expressed in brain.

The protein resides in the golgi apparatus membrane. The enzyme catalyses 3-O-[beta-D-GlcA-(1-&gt;3)-beta-D-Xyl-(1-&gt;4)-Rib-ol-P-Rib-ol-P-3-beta-D-GalNAc-(1-&gt;3)-beta-D-GlcNAc-(1-&gt;4)-(O-6-P-alpha-D-Man)]-Thr-[protein] + UDP-alpha-D-xylose = 3-O-[alpha-D-Xyl-(1-&gt;3)-beta-D-GlcA-(1-&gt;4)-beta-D-Xyl-(1-&gt;4)-Rib-ol-P-Rib-ol-P-3-beta-D-GalNAc-(1-&gt;3)-beta-D-GlcNAc-(1-&gt;4)-(O-6-P-alpha-D-Man)]-Thr-[protein] + UDP + H(+). The catalysed reaction is 3-O-{(1-&gt;[3)-alpha-D-Xyl-(1-&gt;3)-beta-D-GlcA-(1-&gt;](n)-4)-beta-D-Xyl-(1-&gt;4)-Rib-ol-P-Rib-ol-P-3-beta-D-GalNAc-(1-&gt;3)-beta-D-GlcNAc-(1-&gt;4)-O-6-P-alpha-D-Man}-L-Thr-[protein] + UDP-alpha-D-glucuronate = 3-O-{beta-D-GlcA-(1-&gt;[3)-alpha-D-Xyl-(1-&gt;3)-beta-D-GlcA-(1-&gt;](n)-4)-beta-D-Xyl-(1-&gt;4)-Rib-ol-P-Rib-ol-P-3-beta-D-GalNAc-(1-&gt;3)-beta-D-GlcNAc-(1-&gt;4)-O-6-P-alpha-D-Man}-L-Thr-[protein] + UDP + H(+). It catalyses the reaction 3-O-{beta-D-GlcA-(1-&gt;[3)-alpha-D-Xyl-(1-&gt;3)-beta-D-GlcA-(1-&gt;](n)-4)-beta-D-Xyl-(1-&gt;4)-Rib-ol-P-Rib-ol-P-3-beta-D-GalNAc-(1-&gt;3)-beta-D-GlcNAc-(1-&gt;4)-O-6-P-alpha-D-Man}-L-Thr-[protein] + UDP-alpha-D-xylose = 3-O-{(1-&gt;[3)-alpha-D-Xyl-(1-&gt;3)-beta-D-GlcA-(1-&gt;](n+1)-4)-beta-D-Xyl-(1-&gt;4)-Rib-ol-P-Rib-ol-P-3-beta-D-GalNAc-(1-&gt;3)-beta-D-GlcNAc-(1-&gt;4)-O-6-P-alpha-D-Man}-L-Thr-[protein] + UDP + H(+). It participates in protein modification; protein glycosylation. In terms of biological role, bifunctional glycosyltransferase with both alpha-1,3-xylosyltransferase and beta-1,3-glucuronyltransferase activities involved in the maturation of alpha-dystroglycan (DAG1) by glycosylation leading to DAG1 binding to laminin G-like domain-containing extracellular proteins with high affinity and in a phosphorylated-O-mannosyl trisaccharide dependent manner. Elongates the glucuronyl-beta-1,4-xylose-beta disaccharide primer structure by adding repeating units [-3-Xylose-alpha-1,3-GlcA-beta-1-] to produce a heteropolysaccharide. Supports the maturation of DAG1 more effectively than LARGE1. In addition, can modify both heparan sulfate (HS)- and chondroitin/dermatan sulfate (CS/DS)-proteoglycans (PGs), namely GPC4, with a glycosaminoglycan (GAG)-like polysaccharide composed of xylose and glucuronic acid to confer laminin binding. This Homo sapiens (Human) protein is Xylosyl- and glucuronyltransferase LARGE2.